Consider the following 93-residue polypeptide: Small ribosomal subunit protein uS19 (93 aa).

Belongs to the universal ribosomal protein uS19 family.

Functionally, protein S19 forms a complex with S13 that binds strongly to the 16S ribosomal RNA. The sequence is that of Small ribosomal subunit protein uS19 from Oleidesulfovibrio alaskensis (strain ATCC BAA-1058 / DSM 17464 / G20) (Desulfovibrio alaskensis).